The sequence spans 388 residues: Xylose isomerase (388 aa).

Catalysis depends on residues H54 and D57. The Mg(2+) site is built by E181, E217, H220, D245, D255, D257, and D287.

This sequence belongs to the xylose isomerase family. As to quaternary structure, homotetramer. It depends on Mg(2+) as a cofactor.

Its subcellular location is the cytoplasm. It catalyses the reaction alpha-D-xylose = alpha-D-xylulofuranose. The polypeptide is Xylose isomerase (Streptomyces corchorusii (Streptomyces chibaensis)).